The chain runs to 130 residues: ATP synthase epsilon chain (130 aa).

The protein belongs to the ATPase epsilon chain family. In terms of assembly, F-type ATPases have 2 components, CF(1) - the catalytic core - and CF(0) - the membrane proton channel. CF(1) has five subunits: alpha(3), beta(3), gamma(1), delta(1), epsilon(1). CF(0) has three main subunits: a, b and c.

The protein localises to the cell inner membrane. Produces ATP from ADP in the presence of a proton gradient across the membrane. The polypeptide is ATP synthase epsilon chain (Campylobacter lari (strain RM2100 / D67 / ATCC BAA-1060)).